The chain runs to 261 residues: Syntaxin-7 (261 aa).

Residue Ser-2 is modified to N-acetylserine. Residues 2-238 (SYTPGIGGDS…DYQRKSRKTL (237 aa)) are Cytoplasmic-facing. Thr-4 is modified (phosphothreonine). At Ser-45 the chain carries Phosphoserine. Residues 47–68 (ELRQLLQQKQQYTNQLAKETDK) are a coiled coil. The residue at position 75 (Ser-75) is a Phosphoserine. At Thr-79 the chain carries Phosphothreonine. A phosphoserine mark is found at Ser-125, Ser-126, Ser-129, and Ser-205. The segment at 128 to 148 (VSGGFPEDSSKEKNLVSWESQ) is disordered. Residues 165–227 (LRLIHERESS…QQANQQLSRA (63 aa)) form the t-SNARE coiled-coil homology domain. Residues 239-259 (CIIIFILVVRIVIICLIVWGL) traverse the membrane as a helical; Anchor for type IV membrane protein segment. Over 260-261 (KG) the chain is Vesicular.

The protein belongs to the syntaxin family. In terms of assembly, interacts with VPS11, VPS16 and VPS18. Interacts with VPS33A. Forms a SNARE complex with VTI1B, STX8 and VAMP8 which functions in the homotypic fusion of late endosomes. Component of the SNARE complex composed of STX7, STX8, VAMP7 and VTI1B that is required for heterotypic fusion of late endosomes with lysosomes. Interacts with TPC1.

It localises to the early endosome membrane. Functionally, may be involved in protein trafficking from the plasma membrane to the early endosome (EE) as well as in homotypic fusion of endocytic organelles. Mediates the endocytic trafficking from early endosomes to late endosomes and lysosomes. The chain is Syntaxin-7 (Stx7) from Mus musculus (Mouse).